Here is a 1164-residue protein sequence, read N- to C-terminus: FH1/FH2 domain-containing protein 1 (1164 aa).

Residues A53–L458 enclose the GBD/FH3 domain. Disordered stretches follow at residues D340–P411 and M470–A500. Residues K355–L368 show a composition bias toward basic and acidic residues. S367 bears the Phosphoserine mark. Low complexity predominate over residues G402 to P411. S486 carries the post-translational modification Phosphoserine. The FH1 domain maps to P487–P615. Position 495 is a phosphothreonine (T495). S498, S523, and S573 each carry phosphoserine. The tract at residues G566–A619 is disordered. Positions A571 to A608 are enriched in pro residues. Residues H612–G807 are interaction with ROCK1. Positions D616–R1013 constitute an FH2 domain. T690 carries the post-translational modification Phosphothreonine. A coiled-coil region spans residues L884–L921. The interval K1020 to K1143 is disordered. A compositionally biased stretch (low complexity) spans A1028 to G1041. In terms of domain architecture, DAD spans M1053–G1133. The span at M1073 to A1089 shows a compositional bias: polar residues. A compositionally biased stretch (basic residues) spans E1127–L1142.

This sequence belongs to the formin homology family. In terms of assembly, self-associates via the FH2 domain. Binds to F-actin via its N-terminus. Binds to the cytoplasmic domain of CD21 via its C-terminus. Interacts with ROCK1 in a Src-dependent manner. Phosphorylated by ROCK1. In terms of tissue distribution, ubiquitous. Highly expressed in spleen.

Its subcellular location is the cytoplasm. It localises to the cytoskeleton. The protein resides in the cell projection. The protein localises to the bleb. In terms of biological role, required for the assembly of F-actin structures, such as stress fibers. Depends on the Rho-ROCK cascade for its activity. Contributes to the coordination of microtubules with actin fibers and plays a role in cell elongation. Acts synergistically with ROCK1 to promote SRC-dependent non-apoptotic plasma membrane blebbing. The protein is FH1/FH2 domain-containing protein 1 (FHOD1) of Homo sapiens (Human).